A 502-amino-acid chain; its full sequence is Glycogen synthase (502 aa).

K24 is an ADP-alpha-D-glucose binding site.

It belongs to the glycosyltransferase 1 family. Bacterial/plant glycogen synthase subfamily.

It catalyses the reaction [(1-&gt;4)-alpha-D-glucosyl](n) + ADP-alpha-D-glucose = [(1-&gt;4)-alpha-D-glucosyl](n+1) + ADP + H(+). The protein operates within glycan biosynthesis; glycogen biosynthesis. Functionally, synthesizes alpha-1,4-glucan chains using ADP-glucose. The sequence is that of Glycogen synthase from Nitrosomonas eutropha (strain DSM 101675 / C91 / Nm57).